The primary structure comprises 493 residues: Activin receptor type-1C (493 aa).

A signal peptide spans 1 to 25 (MTPARRSALSLALLLVALASDLAAG). The Extracellular segment spans residues 26–113 (LKCVCLLCDS…PDAPRLGPTE (88 aa)). A helical membrane pass occupies residues 114-134 (LTVVITVPVCLLSIAAMLTIW). Over 135-493 (ACQDRQCTYR…QLCVKEDCKA (359 aa)) the chain is Cytoplasmic. The region spanning 165–194 (KTLKDLIYDATASGSGSGPPLLVQRTIART) is the GS domain. The region spanning 195–485 (IVLQEIVGKG…LRVKKTISQL (291 aa)) is the Protein kinase domain. ATP contacts are provided by residues 201–209 (VGKGRFGEV) and Lys-222. Asp-323 (proton acceptor) is an active-site residue.

It belongs to the protein kinase superfamily. TKL Ser/Thr protein kinase family. TGFB receptor subfamily. In terms of assembly, binds the type 2 receptor protein ACVR2A. The cofactor is Mg(2+). Mn(2+) is required as a cofactor. Expressed in brain, kidney, lung, liver, testis, ovary, adrenal gland, heart, prostate, gastrointestinal tract, and spleen. Distributed throughout both adult and embryonic central nervous system and pancreatic islet cells.

It localises to the membrane. It carries out the reaction L-threonyl-[receptor-protein] + ATP = O-phospho-L-threonyl-[receptor-protein] + ADP + H(+). The catalysed reaction is L-seryl-[receptor-protein] + ATP = O-phospho-L-seryl-[receptor-protein] + ADP + H(+). Its function is as follows. Serine/threonine protein kinase which forms a receptor complex on ligand binding. The receptor complex consists of 2 type II and 2 type I transmembrane serine/threonine kinases. Type II receptors phosphorylate and activate type I receptors which autophosphorylate, then bind and activate SMAD transcriptional regulators, SMAD2 and SMAD3. Receptor for activin AB, activin B, activin E and NODAL. Upon NODAL binding, activation results in increased apoptosis and reduced proliferation through suppression of AKT signaling and the activation of Smad2-dependent signaling pathway in pancreatic beta-cells, trophoblasts, epithelial or neuronal cells. Acts as a positive regulator for macrophage activation partially through down-regulation of PPARG expression. This is Activin receptor type-1C from Rattus norvegicus (Rat).